Here is a 529-residue protein sequence, read N- to C-terminus: Bifunctional purine biosynthesis protein PurH (529 aa).

In terms of domain architecture, MGS-like spans 1 to 148; that stretch reads MQQRRPVRRA…KNHRDVAIVV (148 aa). At Lys-287 the chain carries N6-acetyllysine.

Belongs to the PurH family.

It carries out the reaction (6R)-10-formyltetrahydrofolate + 5-amino-1-(5-phospho-beta-D-ribosyl)imidazole-4-carboxamide = 5-formamido-1-(5-phospho-D-ribosyl)imidazole-4-carboxamide + (6S)-5,6,7,8-tetrahydrofolate. It catalyses the reaction IMP + H2O = 5-formamido-1-(5-phospho-D-ribosyl)imidazole-4-carboxamide. It participates in purine metabolism; IMP biosynthesis via de novo pathway; 5-formamido-1-(5-phospho-D-ribosyl)imidazole-4-carboxamide from 5-amino-1-(5-phospho-D-ribosyl)imidazole-4-carboxamide (10-formyl THF route): step 1/1. Its pathway is purine metabolism; IMP biosynthesis via de novo pathway; IMP from 5-formamido-1-(5-phospho-D-ribosyl)imidazole-4-carboxamide: step 1/1. This chain is Bifunctional purine biosynthesis protein PurH, found in Escherichia coli O6:K15:H31 (strain 536 / UPEC).